We begin with the raw amino-acid sequence, 1072 residues long: DNA-directed RNA polymerase subunit beta (1072 aa).

This sequence belongs to the RNA polymerase beta chain family. As to quaternary structure, in plastids the minimal PEP RNA polymerase catalytic core is composed of four subunits: alpha, beta, beta', and beta''. When a (nuclear-encoded) sigma factor is associated with the core the holoenzyme is formed, which can initiate transcription.

It is found in the plastid. The protein localises to the chloroplast. The enzyme catalyses RNA(n) + a ribonucleoside 5'-triphosphate = RNA(n+1) + diphosphate. DNA-dependent RNA polymerase catalyzes the transcription of DNA into RNA using the four ribonucleoside triphosphates as substrates. This is DNA-directed RNA polymerase subunit beta from Cycas taitungensis (Prince sago).